The chain runs to 309 residues: tRNA-cytidine(32) 2-sulfurtransferase (309 aa).

The PP-loop motif signature appears at 45-50; that stretch reads SGGKDS. Positions 120, 123, and 211 each coordinate [4Fe-4S] cluster.

The protein belongs to the TtcA family. Homodimer. Mg(2+) serves as cofactor. The cofactor is [4Fe-4S] cluster.

It is found in the cytoplasm. It carries out the reaction cytidine(32) in tRNA + S-sulfanyl-L-cysteinyl-[cysteine desulfurase] + AH2 + ATP = 2-thiocytidine(32) in tRNA + L-cysteinyl-[cysteine desulfurase] + A + AMP + diphosphate + H(+). The protein operates within tRNA modification. In terms of biological role, catalyzes the ATP-dependent 2-thiolation of cytidine in position 32 of tRNA, to form 2-thiocytidine (s(2)C32). The sulfur atoms are provided by the cysteine/cysteine desulfurase (IscS) system. In Psychromonas ingrahamii (strain DSM 17664 / CCUG 51855 / 37), this protein is tRNA-cytidine(32) 2-sulfurtransferase.